The following is a 183-amino-acid chain: Probable RNA 2'-phosphotransferase (183 aa).

This sequence belongs to the KptA/TPT1 family.

In terms of biological role, removes the 2'-phosphate from RNA via an intermediate in which the phosphate is ADP-ribosylated by NAD followed by a presumed transesterification to release the RNA and generate ADP-ribose 1''-2''-cyclic phosphate (APPR&gt;P). May function as an ADP-ribosylase. The sequence is that of Probable RNA 2'-phosphotransferase from Pyrococcus furiosus (strain ATCC 43587 / DSM 3638 / JCM 8422 / Vc1).